A 327-amino-acid chain; its full sequence is Movement protein (327 aa).

Residues 297–327 (SASSSNTENELARVSQNIDLLKNKLKEICGE) adopt a coiled-coil conformation.

This sequence belongs to the caulimoviridae movement protein family. Homotrimer, through the coiled-coil domain. Interacts with VAP. May interact (via N-terminus) with host prenylated Rab acceptor protein 1D (PRA1D).

The protein resides in the host cell junction. It localises to the host plasmodesma. Its function is as follows. Transports viral genome to neighboring plant cells directly through plasmosdesmata, without any budding. The movement protein allows efficient cell to cell propagation, by bypassing the host cell wall barrier. Acts by forming tubules structures that increase the size exclusion limit (SEL) of plasmodesmata, thereby allowing viral ribonucleocapsids to spread directly to neighboring cells. The protein is Movement protein of Arabidopsis thaliana (Mouse-ear cress).